Here is a 159-residue protein sequence, read N- to C-terminus: Transcriptional repressor NrdR (159 aa).

Residues 3 to 34 (CPFCGSDNTSVKDSRAAEDDTAVRRRRVCESC) fold into a zinc finger. Residues 49–139 (IIVVKRDGKR…VYRDFKDPSD (91 aa)) enclose the ATP-cone domain.

It belongs to the NrdR family. Zn(2+) serves as cofactor.

Functionally, negatively regulates transcription of bacterial ribonucleotide reductase nrd genes and operons by binding to NrdR-boxes. The chain is Transcriptional repressor NrdR from Hyphomonas neptunium (strain ATCC 15444).